The primary structure comprises 314 residues: Probable dimethyladenosine transferase (314 aa).

S-adenosyl-L-methionine contacts are provided by His-36, Leu-38, Gly-63, Glu-84, Asp-112, and Asn-127.

Belongs to the class I-like SAM-binding methyltransferase superfamily. rRNA adenine N(6)-methyltransferase family. As to quaternary structure, part of the small subunit (SSU) processome, composed of more than 70 proteins and the RNA chaperone small nucleolar RNA (snoRNA) U3.

It is found in the nucleus. It localises to the nucleoplasm. The protein localises to the nucleolus. The enzyme catalyses adenosine(1779)/adenosine(1780) in 18S rRNA + 4 S-adenosyl-L-methionine = N(6)-dimethyladenosine(1779)/N(6)-dimethyladenosine(1780) in 18S rRNA + 4 S-adenosyl-L-homocysteine + 4 H(+). Its function is as follows. Specifically dimethylates two adjacent adenosines in the loop of a conserved hairpin near the 3'-end of 18S rRNA in the 40S particle. Involved in the pre-rRNA processing steps leading to small-subunit rRNA production independently of its RNA-modifying catalytic activity. Part of the small subunit (SSU) processome, first precursor of the small eukaryotic ribosomal subunit. During the assembly of the SSU processome in the nucleolus, many ribosome biogenesis factors, an RNA chaperone and ribosomal proteins associate with the nascent pre-rRNA and work in concert to generate RNA folding, modifications, rearrangements and cleavage as well as targeted degradation of pre-ribosomal RNA by the RNA exosome. The protein is Probable dimethyladenosine transferase (dimt1) of Dictyostelium discoideum (Social amoeba).